Reading from the N-terminus, the 248-residue chain is PF03932 family protein CutC (248 aa).

The protein belongs to the CutC family. As to quaternary structure, homodimer.

The protein resides in the cytoplasm. The chain is PF03932 family protein CutC from Escherichia coli (strain 55989 / EAEC).